A 408-amino-acid polypeptide reads, in one-letter code: RUN domain-containing protein 3B (408 aa).

Residues 1–25 are disordered; the sequence is MASRSLGGLSGSRGGGGGGGGKKSL. The span at 8-22 shows a compositional bias: gly residues; sequence GLSGSRGGGGGGGGK. Arginine 13 bears the Omega-N-methylarginine mark. The 133-residue stretch at 58 to 190 folds into the RUN domain; sequence DDSSPEFNNF…IDFSFCLKGE (133 aa). Residues 213-238 are disordered; the sequence is DSISSDEEELRTFGSSDSESSTPENV. Phosphoserine occurs at positions 216 and 217. Positions 225–236 are enriched in polar residues; that stretch reads FGSSDSESSTPE. The stretch at 301 to 326 forms a coiled coil; sequence AHKLEKEQLEYIIVELQDQLKSYQSL. A disordered region spans residues 337–359; it reads QASLDPSHSQEGDGKQDSLNFIG.

The protein belongs to the RUNDC3 family. In terms of assembly, interacts with RAP2A.

The sequence is that of RUN domain-containing protein 3B (Rundc3b) from Mus musculus (Mouse).